Consider the following 185-residue polypeptide: Ribosome-recycling factor (185 aa).

The protein belongs to the RRF family.

The protein localises to the cytoplasm. In terms of biological role, responsible for the release of ribosomes from messenger RNA at the termination of protein biosynthesis. May increase the efficiency of translation by recycling ribosomes from one round of translation to another. This Pseudomonas putida (strain ATCC 700007 / DSM 6899 / JCM 31910 / BCRC 17059 / LMG 24140 / F1) protein is Ribosome-recycling factor.